The sequence spans 708 residues: Ion-translocating oxidoreductase complex subunit C (708 aa).

4Fe-4S ferredoxin-type domains follow at residues 369–397 and 407–436; these read GEPQEEQSCIRCSACADACPADLLPQQLY and KATTHNIADCIECGACAWVCPSNIPLVQYF. [4Fe-4S] cluster contacts are provided by Cys377, Cys380, Cys383, Cys387, Cys416, Cys419, Cys422, and Cys426. Positions 630–682 are disordered; the sequence is AKARKLEQQQANAEPEEQIDPRKAAVEAAIARAKARKLEQQQANAEPEEQIDP.

This sequence belongs to the 4Fe4S bacterial-type ferredoxin family. RnfC subfamily. As to quaternary structure, the complex is composed of six subunits: RsxA, RsxB, RsxC, RsxD, RsxE and RsxG. [4Fe-4S] cluster serves as cofactor.

It localises to the cell inner membrane. Its function is as follows. Part of a membrane-bound complex that couples electron transfer with translocation of ions across the membrane. Required to maintain the reduced state of SoxR. The polypeptide is Ion-translocating oxidoreductase complex subunit C (Escherichia coli (strain UTI89 / UPEC)).